We begin with the raw amino-acid sequence, 335 residues long: Phosphatidate cytidylyltransferase, mitochondrial (335 aa).

It belongs to the TAM41 family. It depends on Mg(2+) as a cofactor.

The protein resides in the mitochondrion inner membrane. It catalyses the reaction a 1,2-diacyl-sn-glycero-3-phosphate + CTP + H(+) = a CDP-1,2-diacyl-sn-glycerol + diphosphate. Its pathway is phospholipid metabolism; CDP-diacylglycerol biosynthesis; CDP-diacylglycerol from sn-glycerol 3-phosphate: step 3/3. Functionally, catalyzes the conversion of phosphatidic acid (PA) to CDP-diacylglycerol (CDP-DAG), an essential intermediate in the synthesis of phosphatidylglycerol, cardiolipin and phosphatidylinositol. The protein is Phosphatidate cytidylyltransferase, mitochondrial (TAMM41) of Bos taurus (Bovine).